Reading from the N-terminus, the 156-residue chain is Small ribosomal subunit protein uS7 (156 aa).

This sequence belongs to the universal ribosomal protein uS7 family. Part of the 30S ribosomal subunit. Contacts proteins S9 and S11.

Its function is as follows. One of the primary rRNA binding proteins, it binds directly to 16S rRNA where it nucleates assembly of the head domain of the 30S subunit. Is located at the subunit interface close to the decoding center, probably blocks exit of the E-site tRNA. This chain is Small ribosomal subunit protein uS7, found in Halalkalibacterium halodurans (strain ATCC BAA-125 / DSM 18197 / FERM 7344 / JCM 9153 / C-125) (Bacillus halodurans).